Consider the following 548-residue polypeptide: Pentatricopeptide repeat-containing protein At5g15300 (548 aa).

PPR repeat units lie at residues 76-110, 111-145, 146-176, 177-211, 212-238, 239-273, 274-308, 314-348, 349-378, 379-409, and 415-445; these read DVSI…GVSP, DRYT…GFVL, NEYV…SAKA, HKVA…DQVA, WNVM…FTEK, DVVT…GEHP, DVVT…ASVS, GTPI…DLST, WNTL…KVWP, NEVT…MRDM, and NIKH…MKIE. The tract at residues 450 to 525 is type E motif; the sequence is VWRTLLGACK…PTGVSLIEED (76 aa).

Belongs to the PPR family. PCMP-E subfamily.

The chain is Pentatricopeptide repeat-containing protein At5g15300 (PCMP-E40) from Arabidopsis thaliana (Mouse-ear cress).